Here is a 355-residue protein sequence, read N- to C-terminus: RNA 3'-terminal phosphate cyclase (355 aa).

ATP-binding positions include Gln-109 and 291–295; that span reads HLADQ. His-316 acts as the Tele-AMP-histidine intermediate in catalysis.

It belongs to the RNA 3'-terminal cyclase family. Type 1 subfamily.

The protein localises to the cytoplasm. It catalyses the reaction a 3'-end 3'-phospho-ribonucleotide-RNA + ATP = a 3'-end 2',3'-cyclophospho-ribonucleotide-RNA + AMP + diphosphate. In terms of biological role, catalyzes the conversion of 3'-phosphate to a 2',3'-cyclic phosphodiester at the end of RNA. The mechanism of action of the enzyme occurs in 3 steps: (A) adenylation of the enzyme by ATP; (B) transfer of adenylate to an RNA-N3'P to produce RNA-N3'PP5'A; (C) and attack of the adjacent 2'-hydroxyl on the 3'-phosphorus in the diester linkage to produce the cyclic end product. The biological role of this enzyme is unknown but it is likely to function in some aspects of cellular RNA processing. This Koribacter versatilis (strain Ellin345) protein is RNA 3'-terminal phosphate cyclase.